A 266-amino-acid chain; its full sequence is Large ribosomal subunit protein uL2m (266 aa).

The protein belongs to the universal ribosomal protein uL2 family.

The protein localises to the mitochondrion. The sequence is that of Large ribosomal subunit protein uL2m (mrpl2) from Dictyostelium discoideum (Social amoeba).